Consider the following 120-residue polypeptide: Large ribosomal subunit protein uL18 (120 aa).

The protein belongs to the universal ribosomal protein uL18 family. As to quaternary structure, part of the 50S ribosomal subunit; part of the 5S rRNA/L5/L18/L25 subcomplex. Contacts the 5S and 23S rRNAs.

In terms of biological role, this is one of the proteins that bind and probably mediate the attachment of the 5S RNA into the large ribosomal subunit, where it forms part of the central protuberance. The polypeptide is Large ribosomal subunit protein uL18 (Rhizobium etli (strain ATCC 51251 / DSM 11541 / JCM 21823 / NBRC 15573 / CFN 42)).